The following is a 296-amino-acid chain: Acetyl-coenzyme A carboxylase carboxyl transferase subunit beta (296 aa).

The CoA carboxyltransferase N-terminal domain occupies 25-294 (VWTKCTACEQ…PFVEPELISE (270 aa)). 4 residues coordinate Zn(2+): C29, C32, C48, and C51. The C4-type zinc finger occupies 29-51 (CTACEQVLYSEELKRNLYVCPKC).

The protein belongs to the AccD/PCCB family. Acetyl-CoA carboxylase is a heterohexamer composed of biotin carboxyl carrier protein (AccB), biotin carboxylase (AccC) and two subunits each of ACCase subunit alpha (AccA) and ACCase subunit beta (AccD). Zn(2+) is required as a cofactor.

Its subcellular location is the cytoplasm. It catalyses the reaction N(6)-carboxybiotinyl-L-lysyl-[protein] + acetyl-CoA = N(6)-biotinyl-L-lysyl-[protein] + malonyl-CoA. Its pathway is lipid metabolism; malonyl-CoA biosynthesis; malonyl-CoA from acetyl-CoA: step 1/1. Functionally, component of the acetyl coenzyme A carboxylase (ACC) complex. Biotin carboxylase (BC) catalyzes the carboxylation of biotin on its carrier protein (BCCP) and then the CO(2) group is transferred by the transcarboxylase to acetyl-CoA to form malonyl-CoA. The chain is Acetyl-coenzyme A carboxylase carboxyl transferase subunit beta from Haemophilus influenzae (strain 86-028NP).